A 106-amino-acid chain; its full sequence is Protein Rev (106 aa).

Residues V8–N16 form a homomultimerization region. Residues Y13–R36 are disordered. The short motif at T24 to R40 is the Nuclear localization signal and RNA-binding (RRE) element. Basic residues predominate over residues Q26–R36. The Nuclear export signal and binding to XPO1 motif lies at L63–D74. Phosphoserine; by host occurs at positions 82 and 89.

It belongs to the HIV-1 REV protein family. In terms of assembly, homomultimer; when bound to the RRE. Multimeric assembly is essential for activity and may involve XPO1. Binds to human KPNB1, XPO1, TNPO1, RANBP5 and IPO7. Interacts with the viral Integrase. Interacts with human KHDRBS1. Interacts with human NAP1; this interaction decreases Rev multimerization and stimulates its activity. Interacts with human DEAD-box helicases DDX3 and DDX24; these interactions may serve for viral RNA export to the cytoplasm and packaging, respectively. Interacts with human PSIP1; this interaction may inhibit HIV-1 DNA integration by promoting dissociation of the Integrase-LEDGF/p75 complex. Post-translationally, asymmetrically arginine dimethylated at one site by host PRMT6. Methylation impairs the RNA-binding activity and export of viral RNA from the nucleus to the cytoplasm. In terms of processing, phosphorylated by protein kinase CK2. Presence of, and maybe binding to the N-terminus of the regulatory beta subunit of CK2 is necessary for CK2-mediated Rev's phosphorylation.

Its subcellular location is the host nucleus. It localises to the host nucleolus. It is found in the host cytoplasm. In terms of biological role, escorts unspliced or incompletely spliced viral pre-mRNAs (late transcripts) out of the nucleus of infected cells. These pre-mRNAs carry a recognition sequence called Rev responsive element (RRE) located in the env gene, that is not present in fully spliced viral mRNAs (early transcripts). This function is essential since most viral proteins are translated from unspliced or partially spliced pre-mRNAs which cannot exit the nucleus by the pathway used by fully processed cellular mRNAs. Rev itself is translated from a fully spliced mRNA that readily exits the nucleus. Rev's nuclear localization signal (NLS) binds directly to KPNB1/Importin beta-1 without previous binding to KPNA1/Importin alpha-1. KPNB1 binds to the GDP bound form of RAN (Ran-GDP) and targets Rev to the nucleus. In the nucleus, the conversion from Ran-GDP to Ran-GTP dissociates Rev from KPNB1 and allows Rev's binding to the RRE in viral pre-mRNAs. Rev multimerization on the RRE via cooperative assembly exposes its nuclear export signal (NES) to the surface. Rev can then form a complex with XPO1/CRM1 and Ran-GTP, leading to nuclear export of the complex. Conversion from Ran-GTP to Ran-GDP mediates dissociation of the Rev/RRE/XPO1/RAN complex, so that Rev can return to the nucleus for a subsequent round of export. Beside KPNB1, also seems to interact with TNPO1/Transportin-1, RANBP5/IPO5 and IPO7/RANBP7 for nuclear import. The nucleoporin-like HRB/RIP is an essential cofactor that probably indirectly interacts with Rev to release HIV RNAs from the perinuclear region to the cytoplasm. The protein is Protein Rev of Homo sapiens (Human).